The chain runs to 187 residues: Orotate phosphoribosyltransferase (187 aa).

5-phospho-alpha-D-ribose 1-diphosphate contacts are provided by residues Arg-103, Lys-104, Lys-107, and Glu-129 to Ser-137. Residues Thr-133 and Arg-161 each coordinate orotate.

The protein belongs to the purine/pyrimidine phosphoribosyltransferase family. PyrE subfamily. As to quaternary structure, homodimer. It depends on Mg(2+) as a cofactor.

The catalysed reaction is orotidine 5'-phosphate + diphosphate = orotate + 5-phospho-alpha-D-ribose 1-diphosphate. The protein operates within pyrimidine metabolism; UMP biosynthesis via de novo pathway; UMP from orotate: step 1/2. In terms of biological role, catalyzes the transfer of a ribosyl phosphate group from 5-phosphoribose 1-diphosphate to orotate, leading to the formation of orotidine monophosphate (OMP). The protein is Orotate phosphoribosyltransferase of Methanosarcina acetivorans (strain ATCC 35395 / DSM 2834 / JCM 12185 / C2A).